Consider the following 224-residue polypeptide: Endoplasmic reticulum vesicle protein 25 (224 aa).

A signal peptide spans 1-25 (MIPPRSLGSTAALLLVLLFTTLASA). Topologically, residues 26-190 (IKFDLPSNAH…ADTNLSTNMR (165 aa)) are lumenal. Positions 38–131 (TKCIWNYALS…IPVVTIDLDV (94 aa)) constitute a GOLD domain. The helical transmembrane segment at 191–211 (VTNFAILTLIALIALGVWQVF) threads the bilayer. Residues 212-224 (HLRGFFKRKYLID) lie on the Cytoplasmic side of the membrane.

It belongs to the EMP24/GP25L family.

The protein localises to the endoplasmic reticulum membrane. Its subcellular location is the golgi apparatus membrane. In terms of biological role, constituent of COPII-coated endoplasmic reticulum-derived transport vesicles. Required for efficient transport of a subset of secretory proteins to the Golgi. Facilitates retrograde transport from the Golgi to the endoplasmic reticulum. This chain is Endoplasmic reticulum vesicle protein 25 (ERV25), found in Mycosarcoma maydis (Corn smut fungus).